A 269-amino-acid chain; its full sequence is Hydroxyethylthiazole kinase (269 aa).

Methionine 42 provides a ligand contact to substrate. Arginine 118 and serine 164 together coordinate ATP. Glycine 191 provides a ligand contact to substrate.

It belongs to the Thz kinase family. Mg(2+) is required as a cofactor.

The catalysed reaction is 5-(2-hydroxyethyl)-4-methylthiazole + ATP = 4-methyl-5-(2-phosphooxyethyl)-thiazole + ADP + H(+). It participates in cofactor biosynthesis; thiamine diphosphate biosynthesis; 4-methyl-5-(2-phosphoethyl)-thiazole from 5-(2-hydroxyethyl)-4-methylthiazole: step 1/1. Its function is as follows. Catalyzes the phosphorylation of the hydroxyl group of 4-methyl-5-beta-hydroxyethylthiazole (THZ). This chain is Hydroxyethylthiazole kinase, found in Listeria monocytogenes serotype 4a (strain HCC23).